The chain runs to 144 residues: Ig heavy chain V region M167 (144 aa).

The N-terminal stretch at 1-19 is a signal peptide; it reads MKMWLNWVFLLTLLHGIQC. In terms of domain architecture, Ig-like spans 20–133; the sequence is EVKVVESGGG…GNSYFGYFDV (114 aa).

The protein is Ig heavy chain V region M167 of Mus musculus (Mouse).